A 54-amino-acid polypeptide reads, in one-letter code: MKAAFVLALCASLASAWVVITPITKEMVVDRSPDDCFFGVVTPQGCGPLRGPAK.

Residues 1–16 form the signal peptide; the sequence is MKAAFVLALCASLASA. Cysteine 36 and cysteine 46 are joined by a disulfide.

Belongs to the MC69 virulence factor family.

The protein localises to the secreted. In terms of biological role, secreted protein required for appressorial penetration of intact host epidermal cells and for pathogenicity. The sequence is that of Secreted virulence factor MC69 from Pyricularia oryzae (strain 70-15 / ATCC MYA-4617 / FGSC 8958) (Rice blast fungus).